A 420-amino-acid polypeptide reads, in one-letter code: Serine hydroxymethyltransferase (420 aa).

Residues leucine 121 and 125 to 127 (GHL) each bind (6S)-5,6,7,8-tetrahydrofolate. An N6-(pyridoxal phosphate)lysine modification is found at lysine 230. Residues glutamate 246 and 354-356 (SPF) each bind (6S)-5,6,7,8-tetrahydrofolate.

The protein belongs to the SHMT family. Homodimer. Requires pyridoxal 5'-phosphate as cofactor.

It localises to the cytoplasm. The catalysed reaction is (6R)-5,10-methylene-5,6,7,8-tetrahydrofolate + glycine + H2O = (6S)-5,6,7,8-tetrahydrofolate + L-serine. It functions in the pathway one-carbon metabolism; tetrahydrofolate interconversion. It participates in amino-acid biosynthesis; glycine biosynthesis; glycine from L-serine: step 1/1. Functionally, catalyzes the reversible interconversion of serine and glycine with tetrahydrofolate (THF) serving as the one-carbon carrier. This reaction serves as the major source of one-carbon groups required for the biosynthesis of purines, thymidylate, methionine, and other important biomolecules. Also exhibits THF-independent aldolase activity toward beta-hydroxyamino acids, producing glycine and aldehydes, via a retro-aldol mechanism. The sequence is that of Serine hydroxymethyltransferase from Rickettsia prowazekii (strain Madrid E).